The following is a 780-amino-acid chain: Cyclin-F (780 aa).

The Nuclear localization signal 1 motif lies at 20 to 28 (KRRIKRRPR). An F-box domain is found at 29–76 (NLTILSLPEDVLFHILKWLSVGDILAVRAVHSHLKYLVDNHASVWASA). In terms of domain architecture, Cyclin N-terminal spans 288 to 405 (QASQAVNKQQ…EIISALEGKI (118 aa)). 3 consecutive short sequence motifs (d box) follow at residues 310–313 (RYIL), 343–346 (RRRL), and 349–352 (RYKL). Disordered stretches follow at residues 544–594 (QESP…AELS), 651–733 (QESS…STKP), and 745–780 (CRPPNPPESGAHQQPVKRQNLSVHSDEDTNLGFLKL). The Nuclear localization signal 2 motif lies at 568 to 574 (RRSKRKR). Residues 582–761 (RGSFVTTPTA…ESGAHQQPVK (180 aa)) form a PEST region. Polar residues predominate over residues 585-594 (FVTTPTAELS). 2 stretches are compositionally biased toward low complexity: residues 695–708 (SGYSSVSSSSPISS) and 719–731 (STSVLSVGSHSST). The short motif at 762 to 765 (RQNL) is the D box 4 element.

Belongs to the cyclin family. Cyclin AB subfamily. Component of the SCF(CCNF) complex consisting of CUL1, RBX1, SKP1 and CCNF. Interacts with SKP1. Interacts with CUL1. Interacts with CCNB1; interaction is required for nuclear localization of CCNB1. Interacts with CCP110; this interaction leads to CCP110 ubiquitination and degradation via the proteasome pathway. Interacts (via the Cyclin N-terminal domain) with MYBL2/BMYB. Interacts with FZR1/CDH1 (via N-terminus). Interacts with RRM2 (via Cy motif and when phosphorylated at 'Thr-33'); the interaction occurs exclusively in G2 and early M. Interacts with CDC6 (via Cy motif); the interaction takes place during G2 and M phase. In terms of processing, degraded when the spindle assembly checkpoint is activated during the G2-M transition. Degradation is not dependent on the proteasome or ubiquitin and depends on the C-terminal PEST sequence. Post-translationally, phosphorylated just before cells enter into mitosis. Ubiquitinated by the anaphase-promoting complex (APC/C); leading to its degradation by the proteasome.

It is found in the nucleus. The protein localises to the cytoplasm. It localises to the perinuclear region. The protein resides in the cytoskeleton. Its subcellular location is the microtubule organizing center. It is found in the centrosome. The protein localises to the centriole. Its function is as follows. Substrate recognition component of a SCF (SKP1-CUL1-F-box protein) E3 ubiquitin-protein ligase complex which mediates the ubiquitination and subsequent proteasomal degradation of target proteins. The SCF(CCNF) E3 ubiquitin-protein ligase complex is an integral component of the ubiquitin proteasome system (UPS) and links proteasome degradation to the cell cycle. Mediates the substrate recognition and the proteasomal degradation of various target proteins involved in the regulation of cell cycle progression and in the maintenance of genome stability. Mediates the ubiquitination and subsequent proteasomal degradation of CP110 during G2 phase, thereby acting as an inhibitor of centrosome reduplication. In G2, mediates the ubiquitination and proteasomal degradation of CDC6, thereby suppressing DNA re-replication and preventing genome instability. Involved in the ubiquitination and degradation of the substrate adapter CDH1 of the anaphase-promoting complex (APC/C), thereby acting as an antagonist of APC/C in regulating G1 progression and S phase entry. May play a role in the G2 cell cycle checkpoint control after DNA damage, possibly by promoting the ubiquitination of MYBL2/BMYB. The polypeptide is Cyclin-F (Ccnf) (Rattus norvegicus (Rat)).